The following is an 805-amino-acid chain: Angiotensin-converting enzyme 2 (805 aa).

Residues 1–17 form the signal peptide; that stretch reads MSGSSWLLLSLVAVTAA. The Extracellular portion of the chain corresponds to 18-740; it reads QSTIEEQAKT…LGPPNQPPVS (723 aa). Residues 19 to 607 enclose the Peptidase M2 domain; sequence STIEEQAKTF…QNKNSFVGWS (589 aa). N-linked (GlcNAc...) asparagine glycans are attached at residues N53, N90, and N103. Cysteines 133 and 141 form a disulfide. R169 contributes to the chloride binding site. R273 is a substrate binding site. The N-linked (GlcNAc...) asparagine glycan is linked to N322. A disulfide bridge connects residues C344 and C361. 345 to 346 lines the substrate pocket; that stretch reads HP. Residue H374 participates in Zn(2+) binding. Catalysis depends on E375, which acts as the Proton acceptor. The Zn(2+) site is built by H378 and E402. Residue N432 is glycosylated (N-linked (GlcNAc...) asparagine). Chloride is bound by residues W477 and K481. The Proton donor role is filled by H505. A substrate-binding site is contributed by Y515. An intrachain disulfide couples C530 to C542. N546 carries an N-linked (GlcNAc...) asparagine glycan. Positions 614-805 constitute a Collectrin-like domain; sequence ADQSIKVRIS…QNTDDVQTSF (192 aa). The segment at 652–659 is essential for cleavage by ADAM17; that stretch reads RKYFLEVK. A glycan (N-linked (GlcNAc...) asparagine) is linked at N690. Residues 697–716 form an essential for cleavage by TMPRSS11D and TMPRSS2 region; it reads RTEVEKAIRMSRSRINDAFR. The chain crosses the membrane as a helical span at residues 741–761; it reads IWLIVFGVVMGVIVVGIVVLI. Over 762–805 the chain is Cytoplasmic; it reads FTGIRDRKKKNKARNEENPYASIDISKGENNPGFQNTDDVQTSF. The segment at 772–805 is disordered; the sequence is NKARNEENPYASIDISKGENNPGFQNTDDVQTSF. The short motif at 778–786 is the LIR element; it reads ENPYASIDI. Residue Y781 is modified to Phosphotyrosine. The Endocytic sorting signal motif lies at 781 to 784; the sequence is YASI. The SH2-binding motif lies at 781-785; that stretch reads YASID. Position 783 is a phosphoserine (S783). K788 is covalently cross-linked (Glycyl lysine isopeptide (Lys-Gly) (interchain with G-Cter in ubiquitin)). The span at 789–805 shows a compositional bias: polar residues; the sequence is GENNPGFQNTDDVQTSF. A PTB motif is present at residues 792 to 795; that stretch reads NPGF. Residues 803–805 carry the PDZ-binding motif; the sequence is TSF.

The protein belongs to the peptidase M2 family. As to quaternary structure, homodimer. Interacts with the catalytically active form of TMPRSS2. Interacts with SLC6A19; this interaction is essential for expression and function of SLC6A19 in intestine. Interacts with ITGA5:ITGB1. Probably interacts (via endocytic sorting signal motif) with AP2M1; the interaction is inhibited by phosphorylation of Tyr-781. Interacts (via PDZ-binding motif) with NHERF1 (via PDZ domains); the interaction may enhance ACE2 membrane residence. Requires Zn(2+) as cofactor. Chloride serves as cofactor. Post-translationally, proteolytic cleavage by ADAM17 generates a secreted form. Also cleaved by serine proteases: TMPRSS2, TMPRSS11D and HPN/TMPRSS1. Phosphorylated. Phosphorylation at Tyr-781 probably inhibits interaction with AP2M1 and enables interactions with proteins containing SH2 domains. In terms of processing, ubiquitinated. Ubiquitinated on Lys-788 via 'Lys-48'-linked ubiquitin. 'Lys-48'-linked deubiquitinated by USP50 on the Lys-788; leading to its stabilization.

It localises to the secreted. The protein localises to the cell membrane. It is found in the cytoplasm. Its subcellular location is the cell projection. The protein resides in the cilium. It localises to the apical cell membrane. It catalyses the reaction angiotensin II + H2O = angiotensin-(1-7) + L-phenylalanine. The enzyme catalyses angiotensin I + H2O = angiotensin-(1-9) + L-leucine. The catalysed reaction is bradykinin(1-8) + H2O = bradykinin(1-7) + L-phenylalanine. It carries out the reaction neurotensin + H2O = neurotensin-(1-12) + L-leucine. It catalyses the reaction kinetensin + H2O = kinetensin-(1-8) + L-leucine. The enzyme catalyses dynorphin A-(1-13) + H2O = dynorphin A-(1-12) + L-lysine. The catalysed reaction is apelin-13 + H2O = apelin-12 + L-phenylalanine. It carries out the reaction [Pyr1]apelin-13 + H2O = [Pyr1]apelin-12 + L-phenylalanine. It catalyses the reaction apelin-17 + H2O = apelin-16 + L-phenylalanine. In terms of biological role, essential counter-regulatory carboxypeptidase of the renin-angiotensin hormone system that is a critical regulator of blood volume, systemic vascular resistance, and thus cardiovascular homeostasis. Converts angiotensin I to angiotensin 1-9, a nine-amino acid peptide with anti-hypertrophic effects in cardiomyocytes, and angiotensin II to angiotensin 1-7, which then acts as a beneficial vasodilator and anti-proliferation agent, counterbalancing the actions of the vasoconstrictor angiotensin II. Also removes the C-terminal residue from three other vasoactive peptides, neurotensin, kinetensin, and des-Arg bradykinin, but is not active on bradykinin. Also cleaves other biological peptides, such as apelins, casomorphins and dynorphin A. Plays an important role in amino acid transport by acting as binding partner of amino acid transporter SLC6A19 in intestine, regulating trafficking, expression on the cell surface, and its catalytic activity. The polypeptide is Angiotensin-converting enzyme 2 (ACE2) (Pongo abelii (Sumatran orangutan)).